The following is a 146-amino-acid chain: Hemoglobin subunit beta (146 aa).

The 145-residue stretch at 2–146 (FLTAEEKGLV…VASALAHRYH (145 aa)) folds into the Globin domain. S44 is modified (phosphoserine). K59 carries the N6-acetyllysine modification. H63 contributes to the heme b binding site. K82 is modified (N6-acetyllysine). A heme b-binding site is contributed by H92. An S-nitrosocysteine modification is found at C93.

This sequence belongs to the globin family. As to quaternary structure, heterotetramer of two alpha chains and two beta chains. In terms of tissue distribution, red blood cells.

Functionally, involved in oxygen transport from the lung to the various peripheral tissues. The sequence is that of Hemoglobin subunit beta (HBB) from Paguma larvata (Masked palm civet).